The primary structure comprises 657 residues: Penicillin-binding protein activator LpoA (657 aa).

The N-terminal stretch at 1–25 (MLSSTFVRSKAGLVPVILAALILAA) is a signal peptide. The N-palmitoyl cysteine moiety is linked to residue Cys-26. The S-diacylglycerol cysteine moiety is linked to residue Cys-26.

The protein belongs to the LpoA family. As to quaternary structure, interacts with PBP1a.

The protein localises to the cell outer membrane. Functionally, regulator of peptidoglycan synthesis that is essential for the function of penicillin-binding protein 1A (PBP1a). The chain is Penicillin-binding protein activator LpoA from Yersinia pseudotuberculosis serotype O:1b (strain IP 31758).